We begin with the raw amino-acid sequence, 1383 residues long: DNA-directed RNA polymerase subunit beta (1383 aa).

It belongs to the RNA polymerase beta chain family. The RNAP catalytic core consists of 2 alpha, 1 beta, 1 beta' and 1 omega subunit. When a sigma factor is associated with the core the holoenzyme is formed, which can initiate transcription.

It carries out the reaction RNA(n) + a ribonucleoside 5'-triphosphate = RNA(n+1) + diphosphate. In terms of biological role, DNA-dependent RNA polymerase catalyzes the transcription of DNA into RNA using the four ribonucleoside triphosphates as substrates. The chain is DNA-directed RNA polymerase subunit beta from Anaplasma phagocytophilum (strain HZ).